Here is a 237-residue protein sequence, read N- to C-terminus: 2-C-methyl-D-erythritol 4-phosphate cytidylyltransferase (237 aa).

Belongs to the IspD/TarI cytidylyltransferase family. IspD subfamily.

The enzyme catalyses 2-C-methyl-D-erythritol 4-phosphate + CTP + H(+) = 4-CDP-2-C-methyl-D-erythritol + diphosphate. Its pathway is isoprenoid biosynthesis; isopentenyl diphosphate biosynthesis via DXP pathway; isopentenyl diphosphate from 1-deoxy-D-xylulose 5-phosphate: step 2/6. Catalyzes the formation of 4-diphosphocytidyl-2-C-methyl-D-erythritol from CTP and 2-C-methyl-D-erythritol 4-phosphate (MEP). The polypeptide is 2-C-methyl-D-erythritol 4-phosphate cytidylyltransferase (Clostridioides difficile (strain 630) (Peptoclostridium difficile)).